The following is a 115-amino-acid chain: Con-Ins G1a (115 aa).

Residues 1–24 form the signal peptide; that stretch reads MTTSSYFLLMALGLLLYVCQSSFG. Positions 25–29 are excised as a propeptide; the sequence is NQHTR. At Pro34 the chain carries 4-hydroxyproline; partial. 3 disulfide bridges follow: Cys38–Cys101, Cys50–Cys114, and Cys100–Cys105. At Glu41 the chain carries 4-carboxyglutamate. The propeptide at 53–94 is c peptide; that stretch reads KRNDAGEKRGRASPLWQRRGSLSKLKARAKRNGAFHLPRDGR. Glu98 carries the 4-carboxyglutamate modification. 4-hydroxyproline; partial is present on Pro104. At Glu109 the chain carries 4-carboxyglutamate; partial. At Cys114 the chain carries Cysteine amide.

This sequence belongs to the insulin family. As to quaternary structure, heterodimer of A and B chains; disulfide-linked. Expressed by the venom gland.

It is found in the secreted. Its function is as follows. This venom insulin, from a fish-hunting cone snail, facilitates prey capture by rapidly inducing hypoglycemic shock. It is one of the smallest known insulin found in nature and lacks the C-terminal segment of the B chain that, in human insulin, mediates engagement of the insulin receptor (INSR) and assembly of the hormone's hexameric storage form. Despite lacking this segment, it both binds and activates human insulin receptor (long isoform (HIR-B)) with a high potency (EC(50)=16.28 nM). In vivo, intraperitoneal injection of this peptide into zebrafish lowers blood glucose with the same potency than human insulin. In addition, when applied to water, this peptide reduces overall locomotor activity of zebrafish larvae, observed as a significant decrease in the percentage of time spent swimming and movement frequency. When tested on a mouse model of diabetes, this insulin also lowers blood glucose with a 10-fold lower potency than human insulin. This is Con-Ins G1a from Conus geographus (Geography cone).